A 521-amino-acid chain; its full sequence is (+)-kolavenyl diphosphate synthase (521 aa).

Positions 311 and 313 each coordinate Mg(2+). The short motif at aspartate 311 to aspartate 314 is the DXDD motif element.

This sequence belongs to the terpene synthase family. It depends on Mg(2+) as a cofactor.

The catalysed reaction is (2E,6E,10E)-geranylgeranyl diphosphate = (+)-kolavenyl diphosphate. Its function is as follows. Involved in the biosynthesis of (+)-O-methylkolavelool. Catalyzes the conversion of geranylgeranyl diphosphate into (+)-kolavenyl diphosphate. The sequence is that of (+)-kolavenyl diphosphate synthase from Herpetosiphon aurantiacus (strain ATCC 23779 / DSM 785 / 114-95).